Reading from the N-terminus, the 663-residue chain is General transcription and DNA repair factor IIH subunit tcf-29 (663 aa).

2 consecutive BSD domains span residues 147-206 (WFED…RAYA) and 227-278 (ENGE…LSKK). 2 disordered regions span residues 452–491 (DSDG…QHVG) and 513–535 (HLTT…EERP). The span at 453–465 (SDGRGGIDLHRSI) shows a compositional bias: basic and acidic residues. Residues 515-528 (TTTTTHGGSHTTTT) are compositionally biased toward low complexity.

It belongs to the TFB1 family. As to quaternary structure, component of the 7-subunit TFIIH core complex composed of XPB/rad25, XPD/dnr-10, tcf-30/SSL1, tcf-29/TFB1, tcf-11/TFB2, tcf-14/TFB4 and rtf-1/TFB5, which is active in NER. The core complex associates with the 3-subunit CTD-kinase module TFIIK composed of div-66/cyclin H, prk-3/KIN28 and rtf-2/TFB3 to form the 10-subunit holoenzyme (holo-TFIIH) active in transcription.

The protein localises to the nucleus. Its function is as follows. Component of the general transcription and DNA repair factor IIH (TFIIH) core complex, which is involved in general and transcription-coupled nucleotide excision repair (NER) of damaged DNA and, when complexed to TFIIK, in RNA transcription by RNA polymerase II. In NER, TFIIH acts by opening DNA around the lesion to allow the excision of the damaged oligonucleotide and its replacement by a new DNA fragment. In transcription, TFIIH has an essential role in transcription initiation. When the pre-initiation complex (PIC) has been established, TFIIH is required for promoter opening and promoter escape. Phosphorylation of the C-terminal tail (CTD) of the largest subunit of RNA polymerase II by the kinase module TFIIK controls the initiation of transcription. The sequence is that of General transcription and DNA repair factor IIH subunit tcf-29 (tcf-29) from Neurospora crassa (strain ATCC 24698 / 74-OR23-1A / CBS 708.71 / DSM 1257 / FGSC 987).